The following is a 345-amino-acid chain: Phenylalanine--tRNA ligase alpha subunit (345 aa).

Residue E255 participates in Mg(2+) binding.

Belongs to the class-II aminoacyl-tRNA synthetase family. Phe-tRNA synthetase alpha subunit type 1 subfamily. As to quaternary structure, tetramer of two alpha and two beta subunits. It depends on Mg(2+) as a cofactor.

It is found in the cytoplasm. The catalysed reaction is tRNA(Phe) + L-phenylalanine + ATP = L-phenylalanyl-tRNA(Phe) + AMP + diphosphate + H(+). The polypeptide is Phenylalanine--tRNA ligase alpha subunit (Lysinibacillus sphaericus (strain C3-41)).